The chain runs to 533 residues: UDP-glucuronosyltransferase 1A1 (533 aa).

The first 25 residues, Met-1 to Ser-25, serve as a signal peptide directing secretion. 3 N-linked (GlcNAc...) asparagine glycosylation sites follow: Asn-102, Asn-295, and Asn-347. Residues Val-491–Phe-507 form a helical membrane-spanning segment.

It belongs to the UDP-glycosyltransferase family. Homodimer. Homooligomer. Interacts with UGT1A3, UGT1A4, UGT1A6, UGT1A7, UGT1A8, UGT1A9 and UGT1A10 to form heterodimers. Isoform 1 interacts with isoform 2/i2 suggesting that oligomerization is involved in negative regulation of transferase activity by isoform 2. Isoform 1 also interacts with respective i2 isoforms of UGT1A3, UGT1A4, UGT1A6, UGT1A7, UGT1A8, UGT1A9 and UGT1A10. Expressed in liver, colon and small intestine. Not expressed in kidney, esophagus and skin. As to expression, expressed in liver, colon, small intestine and kidney. Not expressed in esophagus and skin.

The protein localises to the endoplasmic reticulum membrane. The protein resides in the cytoplasm. It localises to the perinuclear region. The enzyme catalyses glucuronate acceptor + UDP-alpha-D-glucuronate = acceptor beta-D-glucuronoside + UDP + H(+). The catalysed reaction is 17beta-estradiol + UDP-alpha-D-glucuronate = 17beta-estradiol 3-O-(beta-D-glucuronate) + UDP + H(+). It catalyses the reaction 2-hydroxyestrone + UDP-alpha-D-glucuronate = 2-hydroxyestrone 3-O-(beta-D-glucuronate) + UDP + H(+). It carries out the reaction 2-hydroxy-17beta-estradiol + UDP-alpha-D-glucuronate = 2-hydroxy-17beta-estradiol 3-O-(beta-D-glucuronate) + UDP + H(+). The enzyme catalyses 2-methoxy-17beta-estradiol + UDP-alpha-D-glucuronate = 2-methoxy-17beta-estradiol 3-O-(beta-D-glucuronate) + UDP + H(+). The catalysed reaction is 17alpha-estradiol + UDP-alpha-D-glucuronate = 17alpha-estradiol 3-O-(beta-D-glucuronate) + UDP + H(+). It catalyses the reaction 16beta,17beta-estriol + UDP-alpha-D-glucuronate = 16beta,17beta-estriol 16-O-(beta-D-glucuronate) + UDP + H(+). It carries out the reaction losartan + UDP-alpha-D-glucuronate = losartan-2-N-beta-D-glucuronide + UDP. The enzyme catalyses prunetin + UDP-alpha-D-glucuronate = prunetin-4'-O-beta-D-glucuronide + UDP. The catalysed reaction is SN-38 + UDP-alpha-D-glucuronate = SN-38 O-beta-D-glucuronide + UDP + H(+). It catalyses the reaction (4Z,15Z)-bilirubin IXalpha + UDP-alpha-D-glucuronate = (4Z,15Z)-bilirubin IXalpha C12-beta-D-glucuronoside + UDP. It carries out the reaction (4Z,15Z)-bilirubin IXalpha + UDP-alpha-D-glucuronate = (4Z,15Z)-bilirubin IXalpha C8-beta-D-glucuronoside + UDP. The enzyme catalyses (4Z,15Z)-bilirubin IXalpha C8-beta-D-glucuronoside + UDP-alpha-D-glucuronate = (4Z,15Z)-bilirubin IXalpha C8,C12-beta-D-bisglucuronoside + UDP. The catalysed reaction is (4Z,15Z)-bilirubin IXalpha C12-beta-D-glucuronoside + UDP-alpha-D-glucuronate = (4Z,15Z)-bilirubin IXalpha C8,C12-beta-D-bisglucuronoside + UDP. It catalyses the reaction 8-iso-prostaglandin F2alpha + UDP-alpha-D-glucuronate = 8-iso-prostaglandin F2alpha-glucuronide + UDP + H(+). It carries out the reaction (5Z,8Z,11Z,14Z)-eicosatetraenoate + UDP-alpha-D-glucuronate = O-[(5Z),(8Z),(11Z),(14Z)-eicosatetraenoyl]-beta-D-glucuronate + UDP. The enzyme catalyses 15-hydroxy-(5Z,8Z,11Z,13E)-eicosatetraenoate + UDP-alpha-D-glucuronate = 15-O-(beta-D-glucuronosyl)-(5Z,8Z,11Z,14Z)-eicosatetraenoate + UDP + H(+). The catalysed reaction is 20-hydroxy-(5Z,8Z,11Z,14Z)-eicosatetraenoate + UDP-alpha-D-glucuronate = 20-O-(beta-D-glucuronosyl)-(5Z,8Z,11Z,14Z)-eicosatetraenoate + UDP + H(+). It catalyses the reaction prostaglandin B1 + UDP-alpha-D-glucuronate = 15-O-(beta-D-glucuronosyl)-prostaglandin B1 + UDP + H(+). It carries out the reaction (E)-ferulate + UDP-alpha-D-glucuronate = (E)-4-O-(beta-D-glucuronosyl)-ferulate + UDP + H(+). The enzyme catalyses (E)-ferulate + UDP-alpha-D-glucuronate = (E)-ferulic acid beta-D-glucuronate ester + UDP. In terms of biological role, UDP-glucuronosyltransferase (UGT) that catalyzes phase II biotransformation reactions in which lipophilic substrates are conjugated with glucuronic acid to increase the metabolite's water solubility, thereby facilitating excretion into either the urine or bile. Essential for the elimination and detoxification of drugs, xenobiotics and endogenous compounds. Catalyzes the glucuronidation of endogenous estrogen hormones such as estradiol, estrone and estriol. Involved in the glucuronidation of bilirubin, a degradation product occurring in the normal catabolic pathway that breaks down heme in vertebrates. Involved in the glucuronidation of arachidonic acid (AA) and AA-derived eicosanoids including 15-HETE, 20-HETE, PGB1 and F2-isoprostane (8-iso-PGF2alpha). Involved in the glucuronidation of the phytochemical ferulic acid at the phenolic or the carboxylic acid group. Also catalyzes the glucuronidation the isoflavones genistein, daidzein, glycitein, formononetin, biochanin A and prunetin, which are phytoestrogens with anticancer and cardiovascular properties. Involved in the glucuronidation of the AGTR1 angiotensin receptor antagonist losartan, a drug which can inhibit the effect of angiotensin II. Involved in the biotransformation of 7-ethyl-10-hydroxycamptothecin (SN-38), the pharmacologically active metabolite of the anticancer drug irinotecan. Its function is as follows. Lacks UGT glucuronidation activity but acts as a negative regulator of isoform 1. The polypeptide is UDP-glucuronosyltransferase 1A1 (Homo sapiens (Human)).